A 1254-amino-acid chain; its full sequence is MISSGWMQEMEPIPEEGTEADGSEWGAMSDTAKRTMRKKEVYTSEQINTLVSTVPKEAVPQEWLVENQVVDPEMATSYLTESLAGPTSARGSSYSYSYESHYDNPPEEEYEHFTNDDGVHQMQKVTRVTKVTTTRSVRQVPVQSPYSNIDFDSSGLPTPSPVIDRDPSLEMMARMGGASDHDSEDRSAPPPAPASRFLHEDSGIPSAPGVPDVVDAGIGEVTVVWSAPLQSNGGEVRGYQIEMREFPDGEWESMGVDHLLKDTTCRVTNLTSHEVQFRVSAYGRTGFGPASNPSLPVKIPISETDLATSAGAPLAPGRPTVIAVDGQGVLLEWTPPVADVHSSPPQGYQVEYRVYGSRDWIVANEQLVQENVFTVESLRPNGVYEFRVRGKNQDGLGHPSMSSGGVAIRPAAPQRHVPARKVSESVQPPGQPQMVEVGDDVVKLEWAPSVQNARYIVEYREVGDPEWHTANYDPIVQNGIQVEGLHRNSTYEFCVISIVDNIASQPSETSDIIHLRPTCNTSALRPAPNILEAPEFLEVDGDKITICWLPAQSQLPVMGYDVEFRDLQQDDRWYKVNDQPVFACKMTVGDLIMDHDYQFRVLAHNASGCSQPSPPSDFVHIEPSTNRFSSDTMESPHLGHHDVVKYVEAERFGAVPLLQEEMVRESPPLPERDDSPPPLRRANNNVQWRDPSLKEVIEYLSSADKDKQLNASGYLQHLTYTDNQIKEETREYGGIPKLIALLRSDTPRIQKNACACLKNLSFGKENDANKLAVMEADGVRLIAEVLRTTHDASVKEEAAAALWNLSSADMLKPVILESATEILSQQVIAPVLAVGTSDPTRHFGSTLFKNSTGVLRNVSAASQQARRRLRDIPNLIEALVHFLTHAIQKSQVDSPTVENAVCLLRNLSYRIQEVVDPNYDPAAAHSSSSKNMKHVASPKPEKKKKDKEKKKDKNPKNIVTGPSVLWQPHVVKLYLKLLQDSSNIETLEASAGAIQNLAACQFPPSAEVRAAVRVEKGLPVLVELIRLPEDFVVCAVATALRNLAIDPRNRELIGKYALRDFLDKLPEPGSPRRSAISDQTIGAVLGILFEIVRSSAAYTKDVHELKGTDKLRALSRSYPTYSHRVCKYASQVLYVMWQHKELHDGFKRSGLKEADFYSGTARRGDSSTLARPISSQGRERPSMHQLDETLSSGGGYGTMESNNRAGTLRPASATSQTIQRRYDQVPRDGPVYSSVQKPSPRGGGGGGNIDDSWV.

3 disordered regions span residues 1–38 (MISS…TMRK), 84–106 (AGPT…DNPP), and 145–209 (PYSN…SAPG). The span at 12–22 (PIPEEGTEADG) shows a compositional bias: acidic residues. A compositionally biased stretch (polar residues) spans 145–157 (PYSNIDFDSSGLP). 4 Fibronectin type-III domains span residues 207-302 (APGV…IPIS), 315-411 (APGR…IRPA), 428-518 (PPGQ…LRPT), and 530-624 (ILEA…IEPS). Residues 412 to 433 (APQRHVPARKVSESVQPPGQPQ) are disordered. Residues 662–685 (MVRESPPLPERDDSPPPLRRANNN) are disordered. ARM repeat units lie at residues 733-775 (GGIP…AVME), 777-820 (DGVR…ESAT), 874-922 (NLIE…YDPA), 969-1012 (HVVK…RAAV), and 1016-1058 (KGLP…KYAL). Residues 920–960 (DPAAAHSSSSKNMKHVASPKPEKKKKDKEKKKDKNPKNIVT) are disordered. Residues 1159–1254 (GTARRGDSST…GGGNIDDSWV (96 aa)) are disordered. The span at 1166–1176 (SSTLARPISSQ) shows a compositional bias: polar residues. Over residues 1177–1187 (GRERPSMHQLD) the composition is skewed to basic and acidic residues.

This sequence belongs to the beta-catenin family. Associated with the catenin-cadherin complex consisting of hmr-1, hmp-1 and hmp-2. Interacts with hmr-1. Interacts with picc-1. In terms of tissue distribution, epidermal cells.

It localises to the cell junction. The protein localises to the adherens junction. Its subcellular location is the nucleus. Its function is as follows. May act as a positive modulator of hmr-1 function during epidermal morphogenesis. Required for proper localization of other junctional components, such as pac-1. The sequence is that of Juxtamembrane domain-associated catenin (jac-1) from Caenorhabditis elegans.